Here is a 156-residue protein sequence, read N- to C-terminus: Rhombotin-1 (156 aa).

LIM zinc-binding domains lie at 22 to 84 (KGCA…LFGT) and 86 to 148 (GNCA…GQLN).

Expressed in the brain and not in the thymus.

The protein resides in the nucleus. May be involved in gene regulation within neural lineage cells potentially by direct DNA binding or by binding to other transcription factors. This is Rhombotin-1 (LMO1) from Bos taurus (Bovine).